Here is a 150-residue protein sequence, read N- to C-terminus: FAD synthase (150 aa).

ATP is bound by residues 20–21 (TF), 25–28 (HPGH), and D103.

Belongs to the archaeal FAD synthase family. In terms of assembly, homodimer. It depends on a divalent metal cation as a cofactor.

The enzyme catalyses FMN + ATP + H(+) = FAD + diphosphate. It participates in cofactor biosynthesis; FAD biosynthesis; FAD from FMN: step 1/1. Catalyzes the transfer of the AMP portion of ATP to flavin mononucleotide (FMN) to produce flavin adenine dinucleotide (FAD) coenzyme. The protein is FAD synthase of Methanohalobium evestigatum (strain ATCC BAA-1072 / DSM 3721 / NBRC 107634 / OCM 161 / Z-7303).